The chain runs to 280 residues: 3-dehydroshikimate dehydratase (280 aa).

Tyrosine 70, arginine 102, and glutamate 142 together coordinate substrate. A Mn(2+)-binding site is contributed by glutamate 142. Catalysis depends on histidine 144, which acts as the Proton acceptor. Residues aspartate 172 and histidine 175 each contribute to the substrate site. Aspartate 172 is a binding site for Mn(2+). Residue histidine 198 coordinates Mn(2+). Residues tyrosine 217 and glutamate 253 each contribute to the substrate site. Glutamate 253 serves as a coordination point for Mn(2+).

In terms of assembly, homodimer. Requires Mn(2+) as cofactor.

The enzyme catalyses 3-dehydroshikimate = 3,4-dihydroxybenzoate + H2O. The protein operates within aromatic compound metabolism; 3,4-dihydroxybenzoate biosynthesis; 3,4-dihydroxybenzoate from 3-dehydroquinate: step 2/2. It participates in siderophore biosynthesis; petrobactin biosynthesis. Functionally, involved in the biosynthesis of petrobactin, a catecholate siderophore that functions in both iron acquisition and virulence. Catalyzes the conversion of 3-dehydroshikimate to 3,4-dihydroxybenzoate (3,4-DHBA). The protein is 3-dehydroshikimate dehydratase of Bacillus anthracis.